The following is a 750-amino-acid chain: Polyribonucleotide nucleotidyltransferase (750 aa).

The Mg(2+) site is built by Asp489 and Asp495. The KH domain maps to 556 to 620; that stretch reads PKMITRRIPN…EGIDKVIAKI (65 aa). Residues 630 to 701 enclose the S1 motif domain; it reads GSVYEVKVIK…KTRKDKVSRK (72 aa). The segment at 697–750 is disordered; it reads KVSRKALMEKPEGYKERAPRDRDDKRGSRDNNRGRDNRGRDNRRDDRKPRENKD. Basic and acidic residues predominate over residues 702 to 750; it reads ALMEKPEGYKERAPRDRDDKRGSRDNNRGRDNRGRDNRRDDRKPRENKD.

Belongs to the polyribonucleotide nucleotidyltransferase family. The cofactor is Mg(2+).

The protein resides in the cytoplasm. The catalysed reaction is RNA(n+1) + phosphate = RNA(n) + a ribonucleoside 5'-diphosphate. Functionally, involved in mRNA degradation. Catalyzes the phosphorolysis of single-stranded polyribonucleotides processively in the 3'- to 5'-direction. The chain is Polyribonucleotide nucleotidyltransferase from Christiangramia forsetii (strain DSM 17595 / CGMCC 1.15422 / KT0803) (Gramella forsetii).